An 828-amino-acid chain; its full sequence is Glycerol-3-phosphate acyltransferase (828 aa).

The HXXXXD motif motif lies at 309 to 314 (CHRSHI).

The protein belongs to the GPAT/DAPAT family.

The protein localises to the cell inner membrane. It catalyses the reaction sn-glycerol 3-phosphate + an acyl-CoA = a 1-acyl-sn-glycero-3-phosphate + CoA. It participates in phospholipid metabolism; CDP-diacylglycerol biosynthesis; CDP-diacylglycerol from sn-glycerol 3-phosphate: step 1/3. The polypeptide is Glycerol-3-phosphate acyltransferase (Pseudomonas entomophila (strain L48)).